The primary structure comprises 542 residues: 3-(3-hydroxy-phenyl)propionate/3-hydroxycinnamic acid hydroxylase (542 aa).

FAD contacts are provided by residues 10–39 (SVAIVGAGPNGAAMANLLGLYGVDTIVVER) and 278–288 (FVAGRVALIGD).

It belongs to the PheA/TfdB FAD monooxygenase family. It depends on FAD as a cofactor.

It catalyses the reaction 3-(3-hydroxyphenyl)propanoate + NADH + O2 + H(+) = 3-(2,3-dihydroxyphenyl)propanoate + NAD(+) + H2O. The catalysed reaction is (2E)-3-(3-hydroxyphenyl)prop-2-enoate + NADH + O2 + H(+) = (2E)-3-(2,3-dihydroxyphenyl)prop-2-enoate + NAD(+) + H2O. The protein operates within aromatic compound metabolism; 3-phenylpropanoate degradation. Its function is as follows. Catalyzes the insertion of one atom of molecular oxygen into position 2 of the phenyl ring of 3-(3-hydroxyphenyl)propionate (3-HPP) and hydroxycinnamic acid (3HCI). The protein is 3-(3-hydroxy-phenyl)propionate/3-hydroxycinnamic acid hydroxylase of Burkholderia cenocepacia (strain HI2424).